The sequence spans 517 residues: Urethanase (517 aa).

Active-site charge relay system residues include Lys-98 and Ser-173. Ser-197 serves as the catalytic Acyl-ester intermediate.

This sequence belongs to the amidase family. As to quaternary structure, homooctamer.

The catalysed reaction is urethane + H2O + H(+) = ethanol + NH4(+) + CO2. Its activity is regulated as follows. Exhibits poor salt tolerance but excellent tolerance to low concentrations of ethanol. EDTA has almost no impact on activity. Activity is increased in the presence of Ca(2+), Mg(2+) and Co(3+) and inhibited in the presence of Al(3+), Zn(2+) and Cu(2+). In terms of biological role, hydrolase that can catalyze the degradation of ethyl carbamate (also called urethane), a probable human carcinogen widely found in alcoholic beverages. Can also use methyl carbamate, butyl carbamate, acetamide and urea. Also catalyzes the enantioselective hydrolysis of 2-phenylpropionamide, alpha-chlorophenylacetamide, 2-methyl-3-phenylpropionamide and alpha-methoxyphenylacetamide to the corresponding acids. Is inactive on benzamide and L-glutamine. The polypeptide is Urethanase (Rhizobium radiobacter (Agrobacterium tumefaciens)).